A 192-amino-acid chain; its full sequence is UPF0301 protein Bcep1808_0798 (192 aa).

The protein belongs to the UPF0301 (AlgH) family.

In Burkholderia vietnamiensis (strain G4 / LMG 22486) (Burkholderia cepacia (strain R1808)), this protein is UPF0301 protein Bcep1808_0798.